Here is a 196-residue protein sequence, read N- to C-terminus: Retinol-binding protein 4 (196 aa).

Positions 1–21 are cleaved as a signal peptide; sequence MAYTWRALLLLALAFLGSSMA. Disulfide bonds link cysteine 25–cysteine 181, cysteine 91–cysteine 195, and cysteine 141–cysteine 150. Glutamine 119 is a binding site for substrate.

Belongs to the calycin superfamily. Lipocalin family. In terms of assembly, interacts with TTR. Interaction with TTR prevents its loss by filtration through the kidney glomeruli. Interacts with STRA6.

It is found in the secreted. Its function is as follows. Retinol-binding protein that mediates retinol transport in blood plasma. Delivers retinol from the liver stores to the peripheral tissues. Transfers the bound all-trans retinol to STRA6, that then facilitates retinol transport across the cell membrane. This is Retinol-binding protein 4 (RBP4) from Gallus gallus (Chicken).